The following is a 327-amino-acid chain: uncharacterized protein (327 aa).

The N-terminal stretch at 1–23 is a signal peptide; it reads MGGGRLPPLWLPLLIAWSEWGNC. Residues Asn-144 and Asn-239 are each glycosylated (N-linked (GlcNAc...) asparagine; by host). Residues 298 to 327 form a disordered region; the sequence is EESEAAEETAAGEASAVAAAAVSEEEQRRE. Low complexity predominate over residues 305-319; that stretch reads ETAAGEASAVAAAAV.

This is an uncharacterized protein from Human cytomegalovirus (strain AD169) (HHV-5).